The primary structure comprises 135 residues: ATP synthase epsilon chain (135 aa).

It belongs to the ATPase epsilon chain family. In terms of assembly, F-type ATPases have 2 components, CF(1) - the catalytic core - and CF(0) - the membrane proton channel. CF(1) has five subunits: alpha(3), beta(3), gamma(1), delta(1), epsilon(1). CF(0) has three main subunits: a, b and c.

Its subcellular location is the cell inner membrane. Functionally, produces ATP from ADP in the presence of a proton gradient across the membrane. The polypeptide is ATP synthase epsilon chain (Brucella anthropi (strain ATCC 49188 / DSM 6882 / CCUG 24695 / JCM 21032 / LMG 3331 / NBRC 15819 / NCTC 12168 / Alc 37) (Ochrobactrum anthropi)).